The following is a 597-amino-acid chain: Exochitinase 1 (597 aa).

Residues M1 to A29 constitute a signal peptide (or 32). One can recognise a Fibronectin type-III domain in the interval P172–G253. In terms of domain architecture, GH18 spans H264 to G597. The active-site Proton donor is E384.

The protein belongs to the glycosyl hydrolase 18 family. Chitinase class II subfamily. Post-translationally, the N-terminus is blocked.

The catalysed reaction is Random endo-hydrolysis of N-acetyl-beta-D-glucosaminide (1-&gt;4)-beta-linkages in chitin and chitodextrins.. Inhibited by the pseudosugar allosamidin A. Exochitinase that generates exclusively chitobiose from chitotetraose, chitohexaose, and colloidal high-molecular mass chitin. The chain is Exochitinase 1 (chi01) from Streptomyces olivaceoviridis (Streptomyces corchorusii).